The sequence spans 376 residues: Salivary hyaluronidase (376 aa).

A signal peptide spans 1–16; the sequence is MNWIFHLFCAVYGIFC. 2 disulfide bridges follow: Cys32-Cys328 and Cys203-Cys217. Asn36, Asn55, Asn77, and Asn88 each carry an N-linked (GlcNAc...) asparagine glycan. Glu118 acts as the Proton donor in catalysis. N-linked (GlcNAc...) asparagine glycosylation is found at Asn143, Asn153, Asn181, Asn214, Asn226, Asn248, Asn287, Asn321, Asn336, Asn356, and Asn371.

It belongs to the glycosyl hydrolase 56 family. Glycosylated; glycosylation is critical for enzymatic activity. As to expression, female salivary gland (at protein level).

It is found in the secreted. The catalysed reaction is Random hydrolysis of (1-&gt;4)-linkages between N-acetyl-beta-D-glucosamine and D-glucuronate residues in hyaluronate.. Hydrolyzes high molecular weight hyaluronic acid to produce small oligosaccharides. Up-regulates expression of CSF2, CSF3, LIF, CXCL1, CXCL2 and CXCL8 in cultured human dermal microvascular endothelial cells. Promotes host neutrophil recruitment at the injection site. Functionally, (Microbial infection) Probably promotes Leishmania major infection in the host. The polypeptide is Salivary hyaluronidase (Lutzomyia longipalpis (Sand fly)).